A 306-amino-acid polypeptide reads, in one-letter code: tRNA pseudouridine synthase B (306 aa).

Asp-47 serves as the catalytic Nucleophile.

Belongs to the pseudouridine synthase TruB family. Type 1 subfamily.

The catalysed reaction is uridine(55) in tRNA = pseudouridine(55) in tRNA. In terms of biological role, responsible for synthesis of pseudouridine from uracil-55 in the psi GC loop of transfer RNAs. In Neisseria gonorrhoeae (strain NCCP11945), this protein is tRNA pseudouridine synthase B.